The following is a 106-amino-acid chain: Nucleoid-associated protein Noc_2594 (106 aa).

2 disordered regions span residues 1-20 (MKGG…SNME) and 85-106 (QSKE…KLPL). Residues 10 to 20 (KQAQQLQSNME) show a composition bias toward polar residues.

The protein belongs to the YbaB/EbfC family. Homodimer.

The protein localises to the cytoplasm. Its subcellular location is the nucleoid. Binds to DNA and alters its conformation. May be involved in regulation of gene expression, nucleoid organization and DNA protection. This chain is Nucleoid-associated protein Noc_2594, found in Nitrosococcus oceani (strain ATCC 19707 / BCRC 17464 / JCM 30415 / NCIMB 11848 / C-107).